A 441-amino-acid chain; its full sequence is Ribulose bisphosphate carboxylase large chain (441 aa).

N6,N6,N6-trimethyllysine is present on K5. Residues N114 and T164 each coordinate substrate. Catalysis depends on K166, which acts as the Proton acceptor. K168 contacts substrate. Residues K192, D194, and E195 each coordinate Mg(2+). K192 is modified (N6-carboxylysine). H285 acts as the Proton acceptor in catalysis. The substrate site is built by R286, H318, and S370.

Belongs to the RuBisCO large chain family. Type I subfamily. Heterohexadecamer of 8 large chains and 8 small chains; disulfide-linked. The disulfide link is formed within the large subunit homodimers. It depends on Mg(2+) as a cofactor. The disulfide bond which can form in the large chain dimeric partners within the hexadecamer appears to be associated with oxidative stress and protein turnover.

Its subcellular location is the plastid. The protein resides in the chloroplast. The catalysed reaction is 2 (2R)-3-phosphoglycerate + 2 H(+) = D-ribulose 1,5-bisphosphate + CO2 + H2O. The enzyme catalyses D-ribulose 1,5-bisphosphate + O2 = 2-phosphoglycolate + (2R)-3-phosphoglycerate + 2 H(+). In terms of biological role, ruBisCO catalyzes two reactions: the carboxylation of D-ribulose 1,5-bisphosphate, the primary event in carbon dioxide fixation, as well as the oxidative fragmentation of the pentose substrate in the photorespiration process. Both reactions occur simultaneously and in competition at the same active site. This Drosera dichrosepala (Rusty sundew) protein is Ribulose bisphosphate carboxylase large chain.